The following is a 96-amino-acid chain: Frd operon uncharacterized protein C (96 aa).

Belongs to the HupF/HypC family.

The sequence is that of Frd operon uncharacterized protein C from Proteus vulgaris.